Here is a 192-residue protein sequence, read N- to C-terminus: Phosphoheptose isomerase (192 aa).

The SIS domain maps to Leu37 to Lys192. Asn52–Gly54 lines the substrate pocket. Residues His61 and Glu65 each coordinate Zn(2+). Substrate-binding positions include Glu65, Asn93–Asp94, Ser119–Ser121, Ser124, and Gln172. Zn(2+) contacts are provided by Gln172 and His180.

This sequence belongs to the SIS family. GmhA subfamily. As to quaternary structure, homotetramer. It depends on Zn(2+) as a cofactor.

It localises to the cytoplasm. The catalysed reaction is 2 D-sedoheptulose 7-phosphate = D-glycero-alpha-D-manno-heptose 7-phosphate + D-glycero-beta-D-manno-heptose 7-phosphate. It participates in carbohydrate biosynthesis; D-glycero-D-manno-heptose 7-phosphate biosynthesis; D-glycero-alpha-D-manno-heptose 7-phosphate and D-glycero-beta-D-manno-heptose 7-phosphate from sedoheptulose 7-phosphate: step 1/1. In terms of biological role, catalyzes the isomerization of sedoheptulose 7-phosphate in D-glycero-D-manno-heptose 7-phosphate. The sequence is that of Phosphoheptose isomerase from Enterobacter sp. (strain 638).